A 793-amino-acid polypeptide reads, in one-letter code: Protein smoothened (793 aa).

Residues 1 to 32 (MAAGRPVRGPELAPRRLLQLLLLVLLGGPGRG) form the signal peptide. At 33–237 (AALSGNVTGP…EAEHQDMHSY (205 aa)) the chain is on the extracellular side. The interval 35–61 (LSGNVTGPGPHSASGSSRRDVPVTSPP) is disordered. The N-linked (GlcNAc...) asparagine glycan is linked to asparagine 38. 5 cysteine pairs are disulfide-bonded: cysteine 68–cysteine 182, cysteine 74–cysteine 138, cysteine 82–cysteine 131, cysteine 122–cysteine 158, and cysteine 151–cysteine 173. The FZ domain occupies 69–185 (GRAAHCEPLR…DHFPEGCPNE (117 aa)). Residue aspartate 99 coordinates cholesterol. Residue asparagine 192 is glycosylated (N-linked (GlcNAc...) asparagine). Intrachain disulfides connect cysteine 197/cysteine 217, cysteine 221/cysteine 299, and cysteine 318/cysteine 394. Residues 238–258 (IAAFGAVTGLCTLFTLATFVA) form a helical membrane-spanning segment. The Cytoplasmic segment spans residues 259 to 265 (DWRNSNR). A helical transmembrane segment spans residues 266 to 286 (YPAVILFYVNACFFVGSIGWL). Residues 287–318 (AQFMDGARREIVCRADGTMRFGEPTSSETLSC) are Extracellular-facing. The chain crosses the membrane as a helical span at residues 319 to 339 (VIIFVIVYYALMAGVVWFVVL). At 340–362 (TYAWHTSFKALGTTYQPLSGKTS) the chain is on the cytoplasmic side. Residues 363–383 (YFHLLTWSLPFVLTVAILAVA) form a helical membrane-spanning segment. The Extracellular segment spans residues 384 to 406 (QVDGDSVSGICFVGYKNYRYRAG). Cholesterol is bound at residue tyrosine 398. The helical transmembrane segment at 407 to 427 (FVLAPIGLVLIVGGYFLIRGV) threads the bilayer. At 428–455 (MTLFSIKSNHPGLLSEKAASKINETMLR) the chain is on the cytoplasmic side. The chain crosses the membrane as a helical span at residues 456 to 476 (LGIFGFLAFGFVLITFSCHFY). At 477–528 (DFFNQAEWERSFRDYVLCQANVTIGLPTKKPIPDCEIKNRPSLLVEKINLFA) the chain is on the extracellular side. A disulfide bridge connects residues cysteine 494 and cysteine 511. N-linked (GlcNAc...) asparagine glycosylation is present at asparagine 497. Residues 529 to 549 (MFGTGIAMSTWVWTKATLLIW) traverse the membrane as a helical segment. An interaction with BBS5 and BBS7 region spans residues 542–573 (TKATLLIWRRTWCRLTGHSDDEPKRIKKSKMI). The Cytoplasmic segment spans residues 550–793 (RRTWCRLTGH…AEILDADSDF (244 aa)). A phosphoserine mark is found at serine 560, serine 578, and serine 594. The tract at residues 574-657 (AKAFSKRREL…TPVPPEEQAN (84 aa)) is required for interaction with PRKACA. The tract at residues 585-597 (QNPGQELSFSMHT) is interaction with DLG5. Position 597 is a phosphothreonine (threonine 597). Phosphoserine is present on residues serine 599 and serine 642. Phosphothreonine is present on residues threonine 644 and threonine 648. Serine 666 is modified (phosphoserine). Positions 674 to 684 (GRKKKRRKRKK) are enriched in basic residues. Positions 674 to 703 (GRKKKRRKRKKEVCPLRPAPELHHSAPVPA) are disordered.

Belongs to the G-protein coupled receptor Fz/Smo family. As to quaternary structure, homodimer. Interacts (via C-terminus) with protein kinase A catalytic subunit PRKACA; interacts with free PRKACA subunits and the interaction leads to sequestration of PRKACA at the membrane, preventing PRKACA-mediated phosphorylation of GLI transcription factors. Interacts with ARRB2. Interacts with BBS5 and BBS7; the interactions are indicative for the association of SMO with the BBsome complex to facilitate ciliary localization of SMO. Interacts with KIF7, DLG5 and SDCBP. Interacts with GAS8/DRC4. Phosphorylation by GRK kinases is required for interaction with protein kinase A catalytic subunit PRKACA. As to expression, during early somite stages of embryonic development, modestly up-regulated in the cells of the node (at protein level).

Its subcellular location is the cell membrane. It localises to the cell projection. The protein resides in the cilium. In terms of biological role, g protein-coupled receptor which associates with the patched protein (PTCH) to transduce hedgehog protein signaling. Binding of sonic hedgehog (SHH) to its receptor patched prevents inhibition of smoothened (SMO) by patched. When active, SMO binds to and sequesters protein kinase A catalytic subunit PRKACA at the cell membrane, preventing PRKACA-mediated phosphorylation of GLI transcription factors which releases the GLI proteins from PRKACA-mediated inhibition and allows for transcriptional activation of hedgehog pathway target genes. Required for the accumulation of KIF7, GLI2 and GLI3 in the cilia. Interacts with DLG5 at the ciliary base to induce the accumulation of KIF7 and GLI2 at the ciliary tip for GLI2 activation. The sequence is that of Protein smoothened (Smo) from Mus musculus (Mouse).